Reading from the N-terminus, the 323-residue chain is AA9 family lytic polysaccharide monooxygenase A (323 aa).

The first 19 residues, 1–19 (MKSFISLLGLSFLTCHASA), serve as a signal peptide directing secretion. Residues His20 and His90 each contribute to the Cu(2+) site. A disulfide bond links Cys59 and Cys175. His161 and Gln170 together coordinate O2. Tyr172 lines the Cu(2+) pocket. Asn215 carries an N-linked (GlcNAc...) asparagine glycan. Residues 287–323 (AVVQKFGQCGGQGWTGGTTCVAGSTCTATNAYYSQCL) enclose the CBM1 domain.

This sequence belongs to the polysaccharide monooxygenase AA9 family. The cofactor is Cu(2+).

The protein resides in the secreted. It catalyses the reaction [(1-&gt;4)-beta-D-glucosyl]n+m + reduced acceptor + O2 = 4-dehydro-beta-D-glucosyl-[(1-&gt;4)-beta-D-glucosyl]n-1 + [(1-&gt;4)-beta-D-glucosyl]m + acceptor + H2O.. Its function is as follows. Lytic polysaccharide monooxygenase (LPMO) that depolymerizes crystalline and amorphous polysaccharides via the oxidation of scissile alpha- or beta-(1-4)-glycosidic bonds, yielding C1 and C4 oxidation products. Catalysis by LPMOs requires the reduction of the active-site copper from Cu(II) to Cu(I) by a reducing agent and H(2)O(2) or O(2) as a cosubstrate. This chain is AA9 family lytic polysaccharide monooxygenase A, found in Botryotinia fuckeliana (strain B05.10) (Noble rot fungus).